The sequence spans 476 residues: Ubiquinone biosynthesis monooxygenase COQ6, mitochondrial (476 aa).

A mitochondrion-targeting transit peptide spans 1–42 (MAARIGPMAGLLCVRWWSTAQLAARGGPLVACRRWTSSSTDS).

This sequence belongs to the UbiH/COQ6 family. Component of a multi-subunit COQ enzyme complex, composed of at least COQ3, COQ4, COQ5, COQ6, COQ7 and COQ9. Interacts with COQ8B and COQ7. It depends on FAD as a cofactor. As to expression, in the kidney, expressed almost exclusively in glomerular podocytes. In the inner ear, expressed in the spiral ganglion, as well as in stria vascularis and spiral ligament cells.

The protein resides in the mitochondrion inner membrane. It localises to the golgi apparatus. The protein localises to the cell projection. The catalysed reaction is 4-hydroxy-3-(all-trans-decaprenyl)benzoate + 2 reduced [2Fe-2S]-[ferredoxin] + O2 + 2 H(+) = 3,4-dihydroxy-5-(all-trans-decaprenyl)benzoate + 2 oxidized [2Fe-2S]-[ferredoxin] + H2O. The enzyme catalyses 2-methoxy-6-(all-trans-decaprenyl)phenol + 2 reduced [2Fe-2S]-[ferredoxin] + O2 + 2 H(+) = 2-methoxy-6-(all-trans-decaprenyl)benzene-1,4-diol + 2 oxidized [2Fe-2S]-[ferredoxin] + H2O. Its pathway is cofactor biosynthesis; ubiquinone biosynthesis. FAD-dependent monooxygenase required for two non-consecutive steps during ubiquinone biosynthesis. Required for the C5-ring hydroxylation during ubiquinone biosynthesis by catalyzing the hydroxylation of 4-hydroxy-3-(all-trans-decaprenyl)benzoic acid to 3,4-dihydroxy-5-(all-trans-decaprenyl)benzoic acid. Also acts downstream of COQ4, for the C1-hydroxylation during ubiquinone biosynthesis by catalyzing the hydroxylation of 2-methoxy-6-(all-trans-decaprenyl)phenol to 2-methoxy-6-(all-trans-decaprenyl)benzene-1,4-diol. The electrons required for the hydroxylation reaction are funneled indirectly to COQ6 from NADPH via a ferredoxin/ferredoxin reductase system composed of FDX2 and FDXR. The chain is Ubiquinone biosynthesis monooxygenase COQ6, mitochondrial from Rattus norvegicus (Rat).